A 325-amino-acid polypeptide reads, in one-letter code: Quinone oxidoreductase (325 aa).

The protein belongs to the zinc-containing alcohol dehydrogenase family. Quinone oxidoreductase subfamily.

The catalysed reaction is 2 a quinone + NADPH + H(+) = 2 a 1,4-benzosemiquinone + NADP(+). This is Quinone oxidoreductase (qor) from Pseudomonas aeruginosa (strain ATCC 15692 / DSM 22644 / CIP 104116 / JCM 14847 / LMG 12228 / 1C / PRS 101 / PAO1).